The sequence spans 71 residues: Prophage lysis protein S homolog EssQ (71 aa).

This sequence belongs to the lambda phage S protein family.

This is Prophage lysis protein S homolog EssQ (essQ) from Escherichia coli (strain K12).